A 192-amino-acid chain; its full sequence is Pterin-4-alpha-carbinolamine dehydratase (192 aa).

It belongs to the pterin-4-alpha-carbinolamine dehydratase family.

The catalysed reaction is (4aS,6R)-4a-hydroxy-L-erythro-5,6,7,8-tetrahydrobiopterin = (6R)-L-erythro-6,7-dihydrobiopterin + H2O. The protein is Pterin-4-alpha-carbinolamine dehydratase (Pcd) of Drosophila melanogaster (Fruit fly).